The following is a 1048-amino-acid chain: Nonsense-mediated mRNA decay protein 5 (1048 aa).

One can recognise an Importin N-terminal domain in the interval 24-104 (AETHLKNASK…KDMLIKTMVS (81 aa)). A Phosphoserine modification is found at Ser-977.

As to quaternary structure, GTP-bound Ran dissociates the isolated NMD5/TFIIS complex.

The protein localises to the nucleus. It is found in the cytoplasm. Active in protein import into the nucleus. Its major import substrate is transcription elongation factor TFIIS. This Saccharomyces cerevisiae (strain ATCC 204508 / S288c) (Baker's yeast) protein is Nonsense-mediated mRNA decay protein 5 (NMD5).